Here is a 696-residue protein sequence, read N- to C-terminus: Putative cyclic nucleotide-gated ion channel 13 (696 aa).

The Cytoplasmic portion of the chain corresponds to 1–81 (MAFGRNNRVR…QGSFLQNWNK (81 aa)). A disordered region spans residues 45 to 65 (KPLSFGSHNKKRDSNSSTTTQ). Residues 82–102 (IFLFASVIALAIDPLFFYIPI) traverse the membrane as a helical segment. The Extracellular portion of the chain corresponds to 103 to 116 (VDGERHCLNLHRNL). A helical transmembrane segment spans residues 117–137 (EIAASVLRTFIDAFYIIHIVF). Topologically, residues 138-170 (QFRTAYISPSSRVFGRGELVDDPKAIAIKYLSS) are cytoplasmic. A helical transmembrane segment spans residues 171–191 (YFIIDLLSILPLPQLVVLAVI). Residues 192–204 (PNVNKPVSLITKD) are Extracellular-facing. A helical transmembrane segment spans residues 205 to 225 (YLITVIFTQYIPRILRIYPLY). Topologically, residues 226–243 (TEVTRTSGIVTETAWAGA) are cytoplasmic. A helical transmembrane segment spans residues 244–264 (AWNLSLYMLASHVFGALWYLI). The Extracellular segment spans residues 265–367 (SVEREDRCWR…GQNLNTSKFV (103 aa)). Residues 368–388 (GEIIFAVSICISGLVLFALLI) form a helical membrane-spanning segment. At 389 to 696 (GNMQKYLEST…SEPDFSLRNP (308 aa)) the chain is on the cytoplasmic side. Residues 474–598 (LFEI…SKQL) and glutamate 545 contribute to the a nucleoside 3',5'-cyclic phosphate site. The segment at 590–605 (FRRLHSKQLQHTFRFY) is calmodulin-binding. The 30-residue stretch at 610 to 639 (RTWGASFIQAAWRRHCRRKLARSLTEEEDR) folds into the IQ domain. The tract at residues 677 to 696 (NNLPLLPPKPSEPDFSLRNP) is disordered.

This sequence belongs to the cyclic nucleotide-gated cation channel (TC 1.A.1.5) family. In terms of assembly, homotetramer or heterotetramer.

It is found in the cell membrane. Putative cyclic nucleotide-gated ion channel. The protein is Putative cyclic nucleotide-gated ion channel 13 (CNGC13) of Arabidopsis thaliana (Mouse-ear cress).